The chain runs to 204 residues: Probable carboxysome shell protein CsoS1E (204 aa).

3 stretches are compositionally biased toward low complexity: residues 1 to 14 (MPKP…DSPS), 41 to 84 (SAST…AAGS), and 92 to 102 (GGAIKPPASSS). A disordered region spans residues 1–102 (MPKPSSSSSS…GAIKPPASSS (102 aa)). Positions 111–196 (ALGMIETRGM…PHQEVEPALR (86 aa)) constitute a BMC domain.

This sequence belongs to the bacterial microcompartments protein family. In terms of assembly, homohexamer.

The protein resides in the carboxysome. Functionally, a probable carboxysomal shell protein found only in Prochlorococcus and Synechococcus strains that grow in low light. This chain is Probable carboxysome shell protein CsoS1E, found in Prochlorococcus marinus (strain MIT 9313).